The primary structure comprises 130 residues: uncharacterized protein (130 aa).

This is an uncharacterized protein from Pyrococcus horikoshii (strain ATCC 700860 / DSM 12428 / JCM 9974 / NBRC 100139 / OT-3).